The primary structure comprises 323 residues: Methionyl-tRNA formyltransferase (323 aa).

113-116 (SLLP) serves as a coordination point for (6S)-5,6,7,8-tetrahydrofolate.

It belongs to the Fmt family.

The enzyme catalyses L-methionyl-tRNA(fMet) + (6R)-10-formyltetrahydrofolate = N-formyl-L-methionyl-tRNA(fMet) + (6S)-5,6,7,8-tetrahydrofolate + H(+). In terms of biological role, attaches a formyl group to the free amino group of methionyl-tRNA(fMet). The formyl group appears to play a dual role in the initiator identity of N-formylmethionyl-tRNA by promoting its recognition by IF2 and preventing the misappropriation of this tRNA by the elongation apparatus. The chain is Methionyl-tRNA formyltransferase from Porphyromonas gingivalis (strain ATCC 33277 / DSM 20709 / CIP 103683 / JCM 12257 / NCTC 11834 / 2561).